The sequence spans 1080 residues: Histone-lysine N-methyltransferase, H3 lysine-4 specific (1080 aa).

Disordered regions lie at residues 1–46, 54–73, and 78–121; these read MSNY…SQYN, NDGT…NNAS, and YATN…SSGS. The binds SWD2 stretch occupies residues 1 to 230; that stretch reads MSNYYRRAHA…THRKCRNSLI (230 aa). Polar residues predominate over residues 11–28; that stretch reads SSGSYRQPQEQPQYSRSG. Positions 29–46 are enriched in low complexity; it reads HYQYSNGHSHQQYSSQYN. The span at 54 to 67 shows a compositional bias: basic and acidic residues; that stretch reads NDGTRRRYNDDRPH. Composition is skewed to polar residues over residues 78-87 and 99-121; these read YATNNSQSGP and RGMS…SSGS. A binds RNA region spans residues 230 to 569; the sequence is ILLPRISYDR…ALDHANFPEL (340 aa). Residues 356–569 form a binds SHG1 region; the sequence is KKLQKLQENL…ALDHANFPEL (214 aa). Serine 625 carries the post-translational modification Phosphoserine. The disordered stretch occupies residues 646–729; it reads AHLLNEETDS…DQNGSSDVLD (84 aa). The segment covering 674-692 has biased composition (acidic residues); it reads DEEDENMTSSSSEEEEEEA. Positions 693-712 are enriched in basic and acidic residues; sequence PDKKFKSESEPTTPESDHLH. The interval 762 to 938 is binds SPP1; the sequence is MDLQNAIKDE…SLNQLNKRKK (177 aa). Residues 762–938 are contributes to RNA binding; it reads MDLQNAIKDE…SLNQLNKRKK (177 aa). A required for catalytic activity region spans residues 762-938; it reads MDLQNAIKDE…SLNQLNKRKK (177 aa). Threonine 875 carries the phosphothreonine modification. 2 stretches are compositionally biased toward basic and acidic residues: residues 877–890 and 899–909; these read ELCQ…KEPS and SSRDNRASNRR. The tract at residues 877–909 is disordered; it reads ELCQREESSNKEPSDSVPQEVSSSRDNRASNRR. The RxxxRR motif motif lies at 904–909; that stretch reads RASNRR. An SET domain is found at 938–1055; sequence KPVMFARSAI…ASEELTYDYK (118 aa). Tyrosine 1054 serves as a coordination point for S-adenosyl-L-methionine. The Post-SET domain maps to 1064–1080; that stretch reads ERLPCLCGAPNCKGFLN.

The protein belongs to the class V-like SAM-binding methyltransferase superfamily. In terms of assembly, component of the Set1C/COMPASS complex which consists of SET1(2), BRE2(2), SPP1(2), SDC1(1), SHG1(1), SWD1(1), SWD2(1), and SWD3(1). Interacts with MEC3.

Its subcellular location is the nucleus. It is found in the chromosome. It catalyses the reaction L-lysyl(4)-[histone H3] + 3 S-adenosyl-L-methionine = N(6),N(6),N(6)-trimethyl-L-lysyl(4)-[histone H3] + 3 S-adenosyl-L-homocysteine + 3 H(+). The catalysed reaction is N(6)-methyl-L-lysyl(4)-[histone H3] + S-adenosyl-L-methionine = N(6),N(6)-dimethyl-L-lysyl(4)-[histone H3] + S-adenosyl-L-homocysteine + H(+). The enzyme catalyses N(6),N(6)-dimethyl-L-lysyl(4)-[histone H3] + S-adenosyl-L-methionine = N(6),N(6),N(6)-trimethyl-L-lysyl(4)-[histone H3] + S-adenosyl-L-homocysteine + H(+). Functionally, catalytic component of the COMPASS (Set1C) complex that specifically mono-, di- and trimethylates histone H3 to form H3K4me1/2/3. Binds RNAs involved in chromosome segregation, splicing and transcriptional regulation; appears to bind transcripts both co- and post-transcriptionally and binding might negatively affect its histone methyltransferase activity. COMPASS recognizes ubiquitinated H2B on one face of the nucleosome which stimulates the methylation of H3 on the opposing face. Plays a role in telomere length maintenance and transcription elongation regulation. This is Histone-lysine N-methyltransferase, H3 lysine-4 specific from Saccharomyces cerevisiae (strain ATCC 204508 / S288c) (Baker's yeast).